The following is a 231-amino-acid chain: Translin-associated protein X homolog (231 aa).

The protein belongs to the translin family.

The protein resides in the cytoplasm. The protein localises to the nucleus. The protein is Translin-associated protein X homolog of Schizosaccharomyces pombe (strain 972 / ATCC 24843) (Fission yeast).